The following is a 393-amino-acid chain: tRNA(Met) cytidine acetate ligase (393 aa).

The ATP site is built by G81, N142, and R167.

The protein belongs to the TmcAL family.

The protein localises to the cytoplasm. The catalysed reaction is cytidine(34) in elongator tRNA(Met) + acetate + ATP = N(4)-acetylcytidine(34) in elongator tRNA(Met) + AMP + diphosphate. In terms of biological role, catalyzes the formation of N(4)-acetylcytidine (ac(4)C) at the wobble position of elongator tRNA(Met), using acetate and ATP as substrates. First activates an acetate ion to form acetyladenylate (Ac-AMP) and then transfers the acetyl group to tRNA to form ac(4)C34. The protein is tRNA(Met) cytidine acetate ligase of Bacillus cereus (strain ATCC 14579 / DSM 31 / CCUG 7414 / JCM 2152 / NBRC 15305 / NCIMB 9373 / NCTC 2599 / NRRL B-3711).